The chain runs to 381 residues: 1-deoxy-D-xylulose 5-phosphate reductoisomerase (381 aa).

Positions 10, 11, 12, 13, 38, and 121 each coordinate NADPH. Lys-122 contributes to the 1-deoxy-D-xylulose 5-phosphate binding site. Glu-123 contacts NADPH. Asp-147 serves as a coordination point for Mn(2+). Residues Ser-148, Glu-149, Ser-173, and His-196 each coordinate 1-deoxy-D-xylulose 5-phosphate. Mn(2+) is bound at residue Glu-149. NADPH is bound at residue Gly-202. Residues Ser-209, Asn-214, Lys-215, and Glu-218 each contribute to the 1-deoxy-D-xylulose 5-phosphate site. Glu-218 contributes to the Mn(2+) binding site.

It belongs to the DXR family. It depends on Mg(2+) as a cofactor. Requires Mn(2+) as cofactor.

It catalyses the reaction 2-C-methyl-D-erythritol 4-phosphate + NADP(+) = 1-deoxy-D-xylulose 5-phosphate + NADPH + H(+). It participates in isoprenoid biosynthesis; isopentenyl diphosphate biosynthesis via DXP pathway; isopentenyl diphosphate from 1-deoxy-D-xylulose 5-phosphate: step 1/6. Functionally, catalyzes the NADPH-dependent rearrangement and reduction of 1-deoxy-D-xylulose-5-phosphate (DXP) to 2-C-methyl-D-erythritol 4-phosphate (MEP). The protein is 1-deoxy-D-xylulose 5-phosphate reductoisomerase of Alkaliphilus oremlandii (strain OhILAs) (Clostridium oremlandii (strain OhILAs)).